Here is an 803-residue protein sequence, read N- to C-terminus: PR domain zinc finger protein 4 (803 aa).

The 125-residue stretch at 408 to 532 (KQLVLRQSIV…PESELLFYYS (125 aa)) folds into the SET domain. 5 consecutive C2H2-type zinc fingers follow at residues 593 to 615 (WKCSMCPQAFISPSKLHVHFMGH), 621 to 643 (HKCDFCSKAFSDPSNLRTHLKIH), 649 to 671 (YRCTLCDKSFTQKAHLESHMVIH), 677 to 699 (LKCDYCDKLFMRRQDLKQHVLIH), and 705 to 727 (IKCPKCDKLFLRTNHLKKHLNSH). A C2H2-type 6; degenerate zinc finger spans residues 733 to 755 (YVCEKCTKAYLTKYHLTRHLKTC). Positions 757-803 (EPSSSSSAQEEEDDESEEEDLADSMRTEDCRMGSAVYSTDESLSAHK) are disordered. Positions 765–778 (QEEEDDESEEEDLA) are enriched in acidic residues. Polar residues predominate over residues 792-803 (VYSTDESLSAHK).

This sequence belongs to the class V-like SAM-binding methyltransferase superfamily.

Its subcellular location is the nucleus. Functionally, may function as a transcription factor involved in cell differentiation. The protein is PR domain zinc finger protein 4 (Prdm4) of Mus musculus (Mouse).